The following is a 688-amino-acid chain: MWCFVFFSLLASFSAEPTMYGEILSPNYPQAYPNEVVKTWDIEVPEGFGIHLYFTHLDMELSENCAYDSVQIISGGIEEERLCGQRTSKSPNSPTVEEFQFPYNRLQVVFTSDFSNEERFTGFAAYYSAVDVNECTDFTDVPCSHFCNNFIGGYFCSCPPEYFLHDDMRTCGVNCSGDVFTALIGEIASPNYPNPYPENSRCEYQIRLQEGFRLVLTIRREDFDVEPADSEGNCHDSLTFAAKNQQFGPYCGNGFPGPLTIKTQSNTLDIVFQTDLTGQNKGWKLRYHGDPIPCPKEISANSIWEPEKAKYVFKDVVKITCVDGFEVVEGNVGSTSFYSTCQSNGQWSNSRLECQPVDCGVPEPIENGKVEDPEDTVFGSVIHYTCEEPYYYMEQEEGGEYHCAANGSWVNDQLGVELPKCIPVCGVPTEPFKVQQRIFGGYSTKIQSFPWQVYFESPRGGGALIDEYWVLTAAHVVEGNSDPVMYVGSTLLKIERLRNAQRLITERVIIHPSWKQEDDLNTRTNFDNDIALVQLKDPVKMGPTVAPICLPETSSDYNPSEGDLGLISGWGRTENRTNVIQLRGAKLPITSLEKCQQVKVENPKARSNDYVFTDNMICAGEKGVDSCEGDSGGAFALPVPNVKDPKFYVAGLVSWGKKCGTYGIYTKVKNYVDWILKTMQENSGPKKD.

An N-terminal signal peptide occupies residues 1–15; sequence MWCFVFFSLLASFSA. One can recognise a CUB 1 domain in the interval 16 to 130; it reads EPTMYGEILS…TGFAAYYSAV (115 aa). Ca(2+) is bound by residues Glu-60, Asp-68, Asp-113, Asp-131, Val-132, and Glu-134. Cys-65 and Cys-83 form a disulfide bridge. In terms of domain architecture, EGF-like; calcium-binding spans 131–172; it reads DVNECTDFTDVPCSHFCNNFIGGYFCSCPPEYFLHDDMRTCG. 3 disulfides stabilise this stretch: Cys-135-Cys-147, Cys-143-Cys-156, and Cys-158-Cys-171. Residues Asn-149, Phe-150, and Gly-153 each coordinate Ca(2+). Asn-149 is subject to (3R)-3-hydroxyasparagine. The N-linked (GlcNAc...) asparagine glycan is linked to Asn-174. A disulfide bond links Cys-175 and Cys-202. Positions 175–290 constitute a CUB 2 domain; sequence CSGDVFTALI…KGWKLRYHGD (116 aa). Residues Glu-226, Asp-236, Asp-275, Gly-278, and Gln-279 each contribute to the Ca(2+) site. A disulfide bond links Cys-234 and Cys-251. 2 consecutive Sushi domains span residues 292-356 and 357-423; these read IPCP…ECQP and VDCG…KCIP. 7 cysteine pairs are disulfide-bonded: Cys-294–Cys-341, Cys-321–Cys-354, Cys-359–Cys-403, Cys-386–Cys-421, Cys-425–Cys-549, Cys-595–Cys-618, and Cys-627–Cys-659. N-linked (GlcNAc...) asparagine glycosylation is present at Asn-406. The region spanning 438 to 680 is the Peptidase S1 domain; the sequence is IFGGYSTKIQ…YVDWILKTMQ (243 aa). Active-site charge relay system residues include His-475 and Asp-529. Ser-631 (charge relay system) is an active-site residue.

The protein belongs to the peptidase S1 family. As to quaternary structure, core component of the complement C1 complex, a calcium-dependent complex composed of 1 molecule of the C1Q subcomplex, 2 molecules of C1R and 2 molecules of C1S. The C1Q subcomplex is composed 18 subunits: 3 chains of C1QA, C1QB, and C1QC trimerize to form 6 collagen-like triple helices connected to six globular ligand-recognition modules. In terms of processing, cleaved and activated by C1R to generate Complement C1s subcomponent heavy and light chains. The iron and 2-oxoglutarate dependent 3-hydroxylation of aspartate and asparagine is (R) stereospecific within EGF domains.

It is found in the secreted. The protein localises to the cell surface. The catalysed reaction is Cleavage of Arg-|-Ala bond in complement component C4 to form C4a and C4b, and Lys(or Arg)-|-Lys bond in complement component C2 to form C2a and C2b: the 'classical' pathway C3 convertase.. Its activity is regulated as follows. Cleaved and activated by C1R. Immunoglobulin-binding promotes autoactivation of C1R, which results in the cleavage of the Arg-Ile bond in the catalytic domain. Inhibited by C1 inhibitor (SERPING1). Its function is as follows. Component of the complement C1 complex, a multiprotein complex that initiates the classical pathway of the complement system, a cascade of proteins that leads to phagocytosis and breakdown of pathogens and signaling that strengthens the adaptive immune system. C1S is activated following association of the C1 complex with immunoglobulins (IgG or IgM) complexed with antigens to form antigen-antibody complexes on the surface of pathogens. C1S is cleaved and activated by C1R to generate C1s subcomponent heavy and light chains. C1s subcomponent light chain then cleaves and activates C2 and C4, the next components of the classical complement pathway. In terms of biological role, serine protease component of the complement C1 complex, which catalyzes cleavage and activation of C2 and C4, the next components of the classical complement pathway. Also cleaves IGFBP5 and thereby inhibits the trophic effects of IGF1. The polypeptide is Complement C1s subcomponent (Rattus norvegicus (Rat)).